A 1311-amino-acid polypeptide reads, in one-letter code: Sterol regulatory element-binding protein cleavage-activating protein (1311 aa).

Residues 1–18 (MPLIDKLRERISRAFYSH) are Cytoplasmic-facing. A helical membrane pass occupies residues 19–39 (GLLCASYPIPIIILTALCILA). The Lumenal segment spans residues 40–277 (SCYPLLKLPL…HIVHVHFKEE (238 aa)). Residues 46 to 282 (KLPLPGTGPV…HFKEEIGIAE (237 aa)) form a loop-1 region. 2 N-linked (GlcNAc...) asparagine glycosylation sites follow: Asn-242 and Asn-261. A helical membrane pass occupies residues 278–298 (IGIAELIPLVTTYIILFAYIY). The SSD domain occupies 282–440 (ELIPLVTTYI…MFFFTTVLSI (159 aa)). At 299-310 (FSTRKIDLVKSK) the chain is on the cytoplasmic side. The helical transmembrane segment at 311–331 (WGLALAAVVTVLSSLLMSVGL) threads the bilayer. Residues 332–342 (CTLFGLTPTLN) lie on the Lumenal side of the membrane. Residues 343 to 363 (GGEIFPYLVVVIGLENVLVLT) traverse the membrane as a helical segment. The Cytoplasmic portion of the chain corresponds to 364 to 399 (KSVVSTPVDLEVKLRIAQGLRNESWFIMKNMATELG). The helical transmembrane segment at 400–420 (IILIGYFTLVPAIQEFCLFAV) threads the bilayer. A topological domain (lumenal) is located at residue Val-421. The helical transmembrane segment at 422–442 (GLVSDFFLQMFFFTTVLSIDI) threads the bilayer. At 443–512 (RRMELADLNK…FFARTRLAQR (70 aa)) the chain is on the cytoplasmic side. Positions 445–450 (MELADL) match the ER export signal motif. Residues 513-533 (IIMAGTVVWIGILVYTDPAGL) form a helical membrane-spanning segment. A loop-7 region spans residues 529 to 726 (DPAGLRNYLT…QTPADVTLYK (198 aa)). Residues 534–723 (RNYLTVHVTE…TENQTPADVT (190 aa)) lie on the Lumenal side of the membrane. Residues Asn-583 and Asn-651 are each glycosylated (N-linked (GlcNAc...) asparagine). Residues 724 to 744 (LYKVAALGLASGIFLVLFFFL) form a helical membrane-spanning segment. The Cytoplasmic segment spans residues 745–1311 (LYRLLCPKNY…YVPSVLEKLD (567 aa)). The tract at residues 747 to 1311 (RLLCPKNYGQ…YVPSVLEKLD (565 aa)) is interaction with srebf. 7 WD repeats span residues 790 to 827 (GHHMDIECLASDKMLLVSCCLAGQIRVWDAQSGDCLTI), 997 to 1034 (SFESSVWSLGLQGNLIVVGRSNGNLEVWDAIEGSLRCS), 1037 to 1076 (DGQSGITSLVFLNHRVVVARLNGSMDFYCLDSQKSSNQLQ), 1109 to 1146 (AHRKPITALKAAAGRLVTGSQDHTVRIYRLEDACCLFT), 1149 to 1187 (GHSGGITAIYIDETMVLASGGQDGAICLWDVLTGSRVSH), 1190 to 1227 (GHRGDVTSLLCTASCVISSGLDDVISIWDRSTAIKLYS), and 1230 to 1267 (QDLGCGSSLGLISDNLLVTGGLGCVSFWDVGYGDLLQT).

It belongs to the WD repeat SCAP family. As to quaternary structure, membrane region forms a homotetramer. Component of the SCAP-SREBP complex (composed of SCAP and srebf1/srebp1 or srebf2/srebp2). Forms a ternary complex with insig1 or insig2 through its transmembrane domains at high sterol concentrations. Interacts with the SEC23-SEC24 complex.

It is found in the endoplasmic reticulum membrane. It localises to the golgi apparatus membrane. The protein resides in the cytoplasmic vesicle. The protein localises to the COPII-coated vesicle membrane. Its function is as follows. Escort protein required for cholesterol as well as lipid homeostasis. Regulates export of the SCAP-SREBP complex from the endoplasmic reticulum to the Golgi upon low cholesterol, thereby regulating the processing of sterol regulatory element-binding proteins (SREBPs) SREBF1/SREBP1 and SREBF2/SREBP2. At high sterol concentrations, formation of a ternary complex with INSIG (INSIG1 or INSIG2) leads to mask the ER export signal in SCAP, promoting retention of the complex in the endoplasmic reticulum. Low sterol concentrations trigger release of INSIG, a conformational change in the SSD domain of SCAP, unmasking of the ER export signal, promoting recruitment into COPII-coated vesicles and transport of the SCAP-SREBP to the Golgi: in the Golgi, SREBPs are then processed, releasing the transcription factor fragment of SREBPs from the membrane, its import into the nucleus and up-regulation of LDLR, INSIG1 and the mevalonate pathway. Binds cholesterol via its SSD domain. The chain is Sterol regulatory element-binding protein cleavage-activating protein from Xenopus laevis (African clawed frog).